An 878-amino-acid polypeptide reads, in one-letter code: Alanine--tRNA ligase (878 aa).

The Zn(2+) site is built by H568, H572, C670, and H674.

The protein belongs to the class-II aminoacyl-tRNA synthetase family. It depends on Zn(2+) as a cofactor.

The protein resides in the cytoplasm. The catalysed reaction is tRNA(Ala) + L-alanine + ATP = L-alanyl-tRNA(Ala) + AMP + diphosphate. Its function is as follows. Catalyzes the attachment of alanine to tRNA(Ala) in a two-step reaction: alanine is first activated by ATP to form Ala-AMP and then transferred to the acceptor end of tRNA(Ala). Also edits incorrectly charged Ser-tRNA(Ala) and Gly-tRNA(Ala) via its editing domain. This is Alanine--tRNA ligase from Latilactobacillus sakei subsp. sakei (strain 23K) (Lactobacillus sakei subsp. sakei).